Reading from the N-terminus, the 436-residue chain is 3-ketoacyl-CoA thiolase (436 aa).

Cys-99 (acyl-thioester intermediate) is an active-site residue. Active-site proton acceptor residues include His-392 and Cys-422.

This sequence belongs to the thiolase-like superfamily. Thiolase family. As to quaternary structure, heterotetramer of two alpha chains (FadJ) and two beta chains (FadI).

The protein resides in the cytoplasm. It catalyses the reaction an acyl-CoA + acetyl-CoA = a 3-oxoacyl-CoA + CoA. It functions in the pathway lipid metabolism; fatty acid beta-oxidation. Catalyzes the final step of fatty acid oxidation in which acetyl-CoA is released and the CoA ester of a fatty acid two carbons shorter is formed. The chain is 3-ketoacyl-CoA thiolase from Pseudoalteromonas translucida (strain TAC 125).